The sequence spans 168 residues: Mitochondrial ATP-independent inner membrane protease subunit 1a (168 aa).

The N-terminal 47 residues, 1 to 47 (MRMTFLSYLKQWRGTAKEAFENVSIVAKFLCLLHVTDRYIISTTHVH), are a transit peptide targeting the mitochondrion. Active-site residues include S50 and K94.

This sequence belongs to the peptidase S26 family. IMP1 subfamily. In terms of assembly, heterodimer of 2 subunits, IMP1A/B and IMP12.

The protein localises to the mitochondrion inner membrane. Its function is as follows. Catalyzes the removal of transit peptides required for the targeting of proteins from the mitochondrial matrix, across the inner membrane, into the inter-membrane space. This is Mitochondrial ATP-independent inner membrane protease subunit 1a from Arabidopsis thaliana (Mouse-ear cress).